Reading from the N-terminus, the 542-residue chain is Neutral amino acid transporter B(0) (542 aa).

The residue at position 1 (Met-1) is an N-acetylmethionine. The Cytoplasmic portion of the chain corresponds to 1-52; it reads MVADPPRGDSKGLAAAEPTANGGLALASIEDQGEAAGGCCGSRDRVRRCLRA. Residues 53 to 82 form a helical membrane-spanning segment; the sequence is NLLVLLTVVAVVVGVALGLGVSGAGGALAL. The Extracellular portion of the chain corresponds to 83-95; that stretch reads GPERLSAFVFPGE. The chain crosses the membrane as a helical span at residues 96 to 117; sequence LLLRLLRMIILPLVVCSLIGGA. The Cytoplasmic portion of the chain corresponds to 118–131; sequence ASLDPGALGRLGAW. Residues 132–154 traverse the membrane as a helical segment; it reads ALLFFLVTTLLASALGVALALAL. At 155 to 225 the chain is on the extracellular side; it reads QPGAASAAIN…GTRVKVPVGQ (71 aa). Asn-164 and Asn-213 each carry an N-linked (GlcNAc...) asparagine glycan. The chain crosses the membrane as a helical span at residues 226–249; sequence EVEGMNILGLVVFAIVFGVALRKL. The Cytoplasmic segment spans residues 250–258; the sequence is GPEGELLIR. The chain crosses the membrane as a helical span at residues 259 to 286; that stretch reads FFNSFNEATMVLVSWIMWYAPVGIMFLV. At 287–307 the chain is on the extracellular side; it reads AGKIVEMEDVGLLFARLGKYI. A helical transmembrane segment spans residues 308–329; it reads LCCLLGHAIHGLLVLPLIYFLF. Over 330 to 334 the chain is Cytoplasmic; the sequence is TRKNP. The discontinuously helical intramembrane region spans 335–365; it reads YRFLWGIVTPLATAFGTSSSSATLPLMMKCV. Over 366-374 the chain is Cytoplasmic; sequence EENNGVAKH. A helical membrane pass occupies residues 375-401; sequence ISRFILPIGATVNMDGAALFQCVAAVF. Gly-383, Thr-385, and Asn-387 together coordinate Na(+). Over 402–414 the chain is Extracellular; sequence IAQLSEQSLDFVK. The segment at residues 415–448 is an intramembrane region (discontinuously helical); that stretch reads IITILVTATASSVGAAGIPAGGVLTLAIILEAVN. At 449–461 the chain is on the extracellular side; that stretch reads LPVDHISLILAVD. A helical transmembrane segment spans residues 462-483; the sequence is WLVDRSCTVLNVEGDALGAGLL. The Na(+) site is built by Asn-472 and Asp-476. The Cytoplasmic segment spans residues 484–542; sequence QNYVDRTEVRSTEPELIQVKSELPLDPLPAPTEEGNPLLRHYRGPAGDATVASEKESVM. Ser-494 carries the post-translational modification Phosphoserine. Thr-495 bears the Phosphothreonine mark. 3 positions are modified to phosphoserine: Ser-504, Ser-536, and Ser-540. The segment at 509 to 542 is disordered; that stretch reads DPLPAPTEEGNPLLRHYRGPAGDATVASEKESVM.

This sequence belongs to the dicarboxylate/amino acid:cation symporter (DAACS) (TC 2.A.23) family. SLC1A5 subfamily. As to quaternary structure, homotrimer.

The protein resides in the cell membrane. It localises to the melanosome. It carries out the reaction L-glutamine(out) + L-serine(in) + Na(+)(out) = L-glutamine(in) + L-serine(out) + Na(+)(in). The catalysed reaction is L-glutamine(in) + L-serine(out) + Na(+)(out) = L-glutamine(out) + L-serine(in) + Na(+)(in). It catalyses the reaction L-threonine(in) + L-glutamine(out) + Na(+)(out) = L-threonine(out) + L-glutamine(in) + Na(+)(in). The enzyme catalyses L-threonine(out) + L-glutamine(in) + Na(+)(out) = L-threonine(in) + L-glutamine(out) + Na(+)(in). It carries out the reaction L-asparagine(in) + L-glutamine(out) + Na(+)(out) = L-asparagine(out) + L-glutamine(in) + Na(+)(in). The catalysed reaction is L-asparagine(out) + L-glutamine(in) + Na(+)(out) = L-asparagine(in) + L-glutamine(out) + Na(+)(in). It catalyses the reaction L-glutamine(in) + L-alanine(out) + Na(+)(out) = L-glutamine(out) + L-alanine(in) + Na(+)(in). The enzyme catalyses L-valine(out) + L-glutamine(in) + Na(+)(out) = L-valine(in) + L-glutamine(out) + Na(+)(in). It carries out the reaction L-glutamine(in) + L-methionine(out) + Na(+)(out) = L-glutamine(out) + L-methionine(in) + Na(+)(in). The catalysed reaction is L-glutamine(in) + L-glutamate(out) + Na(+)(out) + H(+)(out) = L-glutamine(out) + L-glutamate(in) + Na(+)(in) + H(+)(in). It catalyses the reaction D-serine(in) + L-glutamine(out) + Na(+)(out) = D-serine(out) + L-glutamine(in) + Na(+)(in). The enzyme catalyses D-serine(in) + L-alanine(out) + Na(+)(out) = D-serine(out) + L-alanine(in) + Na(+)(in). It carries out the reaction nitrate(in) = nitrate(out). The catalysed reaction is iodide(out) = iodide(in). It catalyses the reaction thiocyanate(in) = thiocyanate(out). Functionally, sodium-coupled antiporter of neutral amino acids. In a tri-substrate transport cycle, exchanges neutral amino acids between the extracellular and intracellular compartments, coupled to the inward cotransport of at least one sodium ion. The preferred substrate is the essential amino acid L-glutamine, a precursor for biosynthesis of proteins, nucleotides and amine sugars as well as an alternative fuel for mitochondrial oxidative phosphorylation. Exchanges L-glutamine with other neutral amino acids such as L-serine, L-threonine and L-asparagine in a bidirectional way. Provides L-glutamine to proliferating stem and activated cells driving the metabolic switch toward cell differentiation. The transport cycle is usually pH-independent, with the exception of L-glutamate. Transports extracellular L-glutamate coupled to the cotransport of one proton and one sodium ion in exchange for intracellular L-glutamine counter-ion. May provide for L-glutamate uptake in glial cells regulating glutamine/glutamate cycle in the nervous system. Can transport D-amino acids. Mediates D-serine release from the retinal glia potentially affecting NMDA receptor function in retinal neurons. Displays sodium- and amino acid-dependent but uncoupled channel-like anion conductance with a preference SCN(-) &gt;&gt; NO3(-) &gt; I(-) &gt; Cl(-). Through binding of the fusogenic protein syncytin-1/ERVW-1 may mediate trophoblasts syncytialization, the spontaneous fusion of their plasma membranes, an essential process in placental development. This chain is Neutral amino acid transporter B(0) (SLC1A5), found in Macaca fascicularis (Crab-eating macaque).